Consider the following 316-residue polypeptide: 4-hydroxy-3-methylbut-2-enyl diphosphate reductase (316 aa).

Cys-18 serves as a coordination point for [4Fe-4S] cluster. Residues His-47 and His-80 each contribute to the (2E)-4-hydroxy-3-methylbut-2-enyl diphosphate site. Dimethylallyl diphosphate-binding residues include His-47 and His-80. Isopentenyl diphosphate is bound by residues His-47 and His-80. Residue Cys-102 coordinates [4Fe-4S] cluster. (2E)-4-hydroxy-3-methylbut-2-enyl diphosphate is bound at residue His-130. Dimethylallyl diphosphate is bound at residue His-130. His-130 provides a ligand contact to isopentenyl diphosphate. Catalysis depends on Glu-132, which acts as the Proton donor. Position 171 (Thr-171) interacts with (2E)-4-hydroxy-3-methylbut-2-enyl diphosphate. A [4Fe-4S] cluster-binding site is contributed by Cys-201. Residues Ser-229, Ser-230, Asn-231, and Ser-274 each contribute to the (2E)-4-hydroxy-3-methylbut-2-enyl diphosphate site. Dimethylallyl diphosphate is bound by residues Ser-229, Ser-230, Asn-231, and Ser-274. Isopentenyl diphosphate contacts are provided by Ser-229, Ser-230, Asn-231, and Ser-274.

Belongs to the IspH family. [4Fe-4S] cluster is required as a cofactor.

The enzyme catalyses isopentenyl diphosphate + 2 oxidized [2Fe-2S]-[ferredoxin] + H2O = (2E)-4-hydroxy-3-methylbut-2-enyl diphosphate + 2 reduced [2Fe-2S]-[ferredoxin] + 2 H(+). It catalyses the reaction dimethylallyl diphosphate + 2 oxidized [2Fe-2S]-[ferredoxin] + H2O = (2E)-4-hydroxy-3-methylbut-2-enyl diphosphate + 2 reduced [2Fe-2S]-[ferredoxin] + 2 H(+). It participates in isoprenoid biosynthesis; dimethylallyl diphosphate biosynthesis; dimethylallyl diphosphate from (2E)-4-hydroxy-3-methylbutenyl diphosphate: step 1/1. It functions in the pathway isoprenoid biosynthesis; isopentenyl diphosphate biosynthesis via DXP pathway; isopentenyl diphosphate from 1-deoxy-D-xylulose 5-phosphate: step 6/6. In terms of biological role, catalyzes the conversion of 1-hydroxy-2-methyl-2-(E)-butenyl 4-diphosphate (HMBPP) into a mixture of isopentenyl diphosphate (IPP) and dimethylallyl diphosphate (DMAPP). Acts in the terminal step of the DOXP/MEP pathway for isoprenoid precursor biosynthesis. The chain is 4-hydroxy-3-methylbut-2-enyl diphosphate reductase from Paracoccus denitrificans (strain Pd 1222).